A 245-amino-acid chain; its full sequence is 4-hydroxy-tetrahydrodipicolinate reductase (245 aa).

NAD(+) contacts are provided by residues glycine 7–valine 12, glycine 75–threonine 77, and alanine 102–phenylalanine 105. Histidine 132 serves as the catalytic Proton donor/acceptor. Residue histidine 133 coordinates (S)-2,3,4,5-tetrahydrodipicolinate. The Proton donor role is filled by lysine 136. (S)-2,3,4,5-tetrahydrodipicolinate is bound at residue glycine 142–threonine 143.

It belongs to the DapB family.

Its subcellular location is the cytoplasm. It carries out the reaction (S)-2,3,4,5-tetrahydrodipicolinate + NAD(+) + H2O = (2S,4S)-4-hydroxy-2,3,4,5-tetrahydrodipicolinate + NADH + H(+). It catalyses the reaction (S)-2,3,4,5-tetrahydrodipicolinate + NADP(+) + H2O = (2S,4S)-4-hydroxy-2,3,4,5-tetrahydrodipicolinate + NADPH + H(+). The protein operates within amino-acid biosynthesis; L-lysine biosynthesis via DAP pathway; (S)-tetrahydrodipicolinate from L-aspartate: step 4/4. Functionally, catalyzes the conversion of 4-hydroxy-tetrahydrodipicolinate (HTPA) to tetrahydrodipicolinate. The chain is 4-hydroxy-tetrahydrodipicolinate reductase from Mycobacterium sp. (strain KMS).